Consider the following 235-residue polypeptide: Carbonic anhydrase 1 (235 aa).

In terms of domain architecture, Alpha-carbonic anhydrase spans 1-235; it reads GNKQSPVDIK…LKGRTVKASF (235 aa). His40 serves as the catalytic Proton donor/acceptor. Residues His69, His71, and His94 each contribute to the Zn(2+) site. Substrate contacts are provided by residues Thr174 and 174 to 175; that span reads TH.

It belongs to the alpha-carbonic anhydrase family. It depends on Zn(2+) as a cofactor.

The protein resides in the cytoplasm. It carries out the reaction hydrogencarbonate + H(+) = CO2 + H2O. The enzyme catalyses urea = cyanamide + H2O. With respect to regulation, inhibited by acetazolamide. Its function is as follows. Catalyzes the reversible hydration of carbon dioxide. Can hydrate cyanamide to urea. This Oryctolagus cuniculus (Rabbit) protein is Carbonic anhydrase 1 (CA1).